We begin with the raw amino-acid sequence, 212 residues long: Putative DNA-binding protein At1g48610 (212 aa).

Residues Met1–Ala130 are disordered. A compositionally biased stretch (polar residues) spans Asn27 to Gln44. 3 DNA-binding regions (a.T hook) span residues Lys45–Ser56, Thr70–Asn79, and Lys94–Arg98. Positions Asp57–Pro72 are enriched in polar residues. Residues Thr103–Thr113 show a composition bias toward low complexity. Residues Arg118 to Asp127 constitute a DNA-binding region (a.T hook 4). Positions Asp176–Asp210 form a coiled coil.

The protein localises to the nucleus. May bind DNA. In Arabidopsis thaliana (Mouse-ear cress), this protein is Putative DNA-binding protein At1g48610.